The sequence spans 98 residues: Integration host factor subunit alpha (98 aa).

The segment at 49 to 71 (FGNFDLRDKNQRPGRNPKTGEDI) is disordered.

Belongs to the bacterial histone-like protein family. In terms of assembly, heterodimer of an alpha and a beta chain.

This protein is one of the two subunits of integration host factor, a specific DNA-binding protein that functions in genetic recombination as well as in transcriptional and translational control. The chain is Integration host factor subunit alpha from Shewanella oneidensis (strain ATCC 700550 / JCM 31522 / CIP 106686 / LMG 19005 / NCIMB 14063 / MR-1).